The chain runs to 130 residues: Small ribosomal subunit protein bS6 (130 aa).

The interval serine 100–glutamate 130 is disordered. The span at lysine 104–phenylalanine 116 shows a compositional bias: basic and acidic residues. The span at alanine 117 to glutamate 130 shows a compositional bias: acidic residues.

It belongs to the bacterial ribosomal protein bS6 family.

Functionally, binds together with bS18 to 16S ribosomal RNA. In Pectobacterium atrosepticum (strain SCRI 1043 / ATCC BAA-672) (Erwinia carotovora subsp. atroseptica), this protein is Small ribosomal subunit protein bS6.